The primary structure comprises 475 residues: Glycogen synthase (475 aa).

Lys-15 is a binding site for ADP-alpha-D-glucose.

This sequence belongs to the glycosyltransferase 1 family. Bacterial/plant glycogen synthase subfamily.

The catalysed reaction is [(1-&gt;4)-alpha-D-glucosyl](n) + ADP-alpha-D-glucose = [(1-&gt;4)-alpha-D-glucosyl](n+1) + ADP + H(+). It functions in the pathway glycan biosynthesis; glycogen biosynthesis. Synthesizes alpha-1,4-glucan chains using ADP-glucose. The sequence is that of Glycogen synthase from Anaeromyxobacter sp. (strain Fw109-5).